An 88-amino-acid polypeptide reads, in one-letter code: Mitochondrial import inner membrane translocase subunit tim9 (88 aa).

Positions 35 to 59 (CFTACVDDFTSKALSGRESGCISRC) match the Twin CX3C motif motif. Disulfide bonds link cysteine 35–cysteine 59 and cysteine 39–cysteine 55.

It belongs to the small Tim family. As to quaternary structure, heterohexamer; composed of 3 copies of tim9 and 3 copies of tim10, named soluble 70 kDa complex. Associates with the tim22 complex, whose core is composed of tim22 and tim54. Interacts with the transmembrane regions of multi-pass transmembrane proteins in transit.

Its subcellular location is the mitochondrion inner membrane. Its function is as follows. Mitochondrial intermembrane chaperone that participates in the import and insertion of multi-pass transmembrane proteins into the mitochondrial inner membrane. Also required for the transfer of beta-barrel precursors from the TOM complex to the sorting and assembly machinery (SAM complex) of the outer membrane. Acts as a chaperone-like protein that protects the hydrophobic precursors from aggregation and guide them through the mitochondrial intermembrane space. This Neurospora crassa (strain ATCC 24698 / 74-OR23-1A / CBS 708.71 / DSM 1257 / FGSC 987) protein is Mitochondrial import inner membrane translocase subunit tim9 (tim9).